Reading from the N-terminus, the 373-residue chain is 4-hydroxy-3-methylbut-2-en-1-yl diphosphate synthase (flavodoxin) (373 aa).

[4Fe-4S] cluster contacts are provided by Cys-268, Cys-271, Cys-303, and Glu-310.

The protein belongs to the IspG family. Requires [4Fe-4S] cluster as cofactor.

The catalysed reaction is (2E)-4-hydroxy-3-methylbut-2-enyl diphosphate + oxidized [flavodoxin] + H2O + 2 H(+) = 2-C-methyl-D-erythritol 2,4-cyclic diphosphate + reduced [flavodoxin]. It functions in the pathway isoprenoid biosynthesis; isopentenyl diphosphate biosynthesis via DXP pathway; isopentenyl diphosphate from 1-deoxy-D-xylulose 5-phosphate: step 5/6. Its function is as follows. Converts 2C-methyl-D-erythritol 2,4-cyclodiphosphate (ME-2,4cPP) into 1-hydroxy-2-methyl-2-(E)-butenyl 4-diphosphate. The protein is 4-hydroxy-3-methylbut-2-en-1-yl diphosphate synthase (flavodoxin) of Exiguobacterium sp. (strain ATCC BAA-1283 / AT1b).